Here is a 501-residue protein sequence, read N- to C-terminus: Phenylalanine--tRNA ligase alpha subunit (501 aa).

Residues threonine 340 and phenylalanine 423 each contribute to the L-phenylalanine site. Glutamate 425 contributes to the Mg(2+) binding site. Phenylalanine 448 provides a ligand contact to L-phenylalanine.

This sequence belongs to the class-II aminoacyl-tRNA synthetase family. Phe-tRNA synthetase alpha subunit type 2 subfamily. Tetramer of two alpha and two beta subunits. Mg(2+) serves as cofactor.

The protein resides in the cytoplasm. The enzyme catalyses tRNA(Phe) + L-phenylalanine + ATP = L-phenylalanyl-tRNA(Phe) + AMP + diphosphate + H(+). The chain is Phenylalanine--tRNA ligase alpha subunit from Methanococcus vannielii (strain ATCC 35089 / DSM 1224 / JCM 13029 / OCM 148 / SB).